A 532-amino-acid chain; its full sequence is MEGDSYHNATTVNGTPVNHQPLERHRLWEVITIAAVTAVVSLITIVGNVLVMISFKVNSQLKTVNNYYLLSLACADLIIGIFSMNLYTTYILMGRWALGSLACDLWLALDYVASNASVMNLLVISFDRYFSITRPLTYRAKRTPKRAGIMIGLAWLISFILWAPAILCWQYLVGKRTVPLDECQIQFLSEPTITFGTAIAAFYIPVSVMTILYCRIYRETEKRTKDLADLQGSDSVTKAEKRKPAHRALFRSCLRCPRPTLAQRERNQASWSSSRRSTSTTGKPSQATGPSANWAKAEQLTTCSSYPSSEDEDKPATDPVLQVVYKSQGKESPGEEFSAEETEETFVKAETEKSDYDTPNYLLSPAAAHRPKSQKCVAYKFRLVVKADGNQETNNGCHKVKIMPCPFPVAKEPSTKGLNPNPSHQMTKRKRVVLVKERKAAQTLSAILLAFIITWTPYNIMVLVSTFCDKCVPVTLWHLGYWLCYVNSTVNPICYALCNRTFRKTFKMLLLCRWKKKKVEEKLYWQGNSKLP.

Residues 1–29 (MEGDSYHNATTVNGTPVNHQPLERHRLWE) are Extracellular-facing. Asparagine 8 carries an N-linked (GlcNAc...) asparagine glycan. The helical transmembrane segment at 30–53 (VITIAAVTAVVSLITIVGNVLVMI) threads the bilayer. Residues 54-66 (SFKVNSQLKTVNN) lie on the Cytoplasmic side of the membrane. The helical transmembrane segment at 67-87 (YYLLSLACADLIIGIFSMNLY) threads the bilayer. The Extracellular portion of the chain corresponds to 88–104 (TTYILMGRWALGSLACD). A disulfide bridge links cysteine 103 with cysteine 183. Residues 105 to 126 (LWLALDYVASNASVMNLLVISF) form a helical membrane-spanning segment. At 127–146 (DRYFSITRPLTYRAKRTPKR) the chain is on the cytoplasmic side. Residues 147–169 (AGIMIGLAWLISFILWAPAILCW) form a helical membrane-spanning segment. Over 170 to 191 (QYLVGKRTVPLDECQIQFLSEP) the chain is Extracellular. A helical membrane pass occupies residues 192–214 (TITFGTAIAAFYIPVSVMTILYC). At 215 to 443 (RIYRETEKRT…LVKERKAAQT (229 aa)) the chain is on the cytoplasmic side. The tract at residues 262–294 (AQRERNQASWSSSRRSTSTTGKPSQATGPSANW) is disordered. Positions 270 to 281 (SWSSSRRSTSTT) are enriched in low complexity. The segment covering 282-291 (GKPSQATGPS) has biased composition (polar residues). A helical transmembrane segment spans residues 444 to 464 (LSAILLAFIITWTPYNIMVLV). At 465-478 (STFCDKCVPVTLWH) the chain is on the extracellular side. The helical transmembrane segment at 479-498 (LGYWLCYVNSTVNPICYALC) threads the bilayer. Over 499-532 (NRTFRKTFKMLLLCRWKKKKVEEKLYWQGNSKLP) the chain is Cytoplasmic. 2 positions are modified to phosphothreonine: threonine 501 and threonine 505.

The protein belongs to the G-protein coupled receptor 1 family. Muscarinic acetylcholine receptor subfamily. CHRM5 sub-subfamily.

The protein resides in the cell membrane. The protein localises to the postsynaptic cell membrane. In terms of biological role, the muscarinic acetylcholine receptor mediates various cellular responses, including inhibition of adenylate cyclase, breakdown of phosphoinositides and modulation of potassium channels through the action of G proteins. Primary transducing effect is Pi turnover. In Homo sapiens (Human), this protein is Muscarinic acetylcholine receptor M5 (CHRM5).